The following is a 196-amino-acid chain: Ribosome-binding factor A (196 aa).

It belongs to the RbfA family. In terms of assembly, monomer. Binds 30S ribosomal subunits, but not 50S ribosomal subunits or 70S ribosomes.

It localises to the cytoplasm. In terms of biological role, one of several proteins that assist in the late maturation steps of the functional core of the 30S ribosomal subunit. Associates with free 30S ribosomal subunits (but not with 30S subunits that are part of 70S ribosomes or polysomes). Required for efficient processing of 16S rRNA. May interact with the 5'-terminal helix region of 16S rRNA. The chain is Ribosome-binding factor A from Tropheryma whipplei (strain TW08/27) (Whipple's bacillus).